The following is a 46-amino-acid chain: Large ribosomal subunit protein bL36 (46 aa).

The protein belongs to the bacterial ribosomal protein bL36 family.

The chain is Large ribosomal subunit protein bL36 from Klebsiella pneumoniae (strain 342).